We begin with the raw amino-acid sequence, 750 residues long: 3-isopropylmalate dehydratase (750 aa).

3 residues coordinate [4Fe-4S] cluster: C353, C413, and C416. Residues 492 to 524 (KYDGSPEVFKSTQDTTPAVKPPQPASDSSSSGG) are disordered.

Belongs to the aconitase/IPM isomerase family. As to quaternary structure, monomer. Requires [4Fe-4S] cluster as cofactor.

It carries out the reaction (2R,3S)-3-isopropylmalate = (2S)-2-isopropylmalate. Its pathway is amino-acid biosynthesis; L-leucine biosynthesis; L-leucine from 3-methyl-2-oxobutanoate: step 2/4. In terms of biological role, catalyzes the isomerization between 2-isopropylmalate and 3-isopropylmalate, via the formation of 2-isopropylmaleate. The sequence is that of 3-isopropylmalate dehydratase (LEU1) from Rhizopus niveus.